Here is a 145-residue protein sequence, read N- to C-terminus: 3-hydroxyacyl-[acyl-carrier-protein] dehydratase FabZ (145 aa).

H51 is an active-site residue.

It belongs to the thioester dehydratase family. FabZ subfamily.

The protein resides in the cytoplasm. It carries out the reaction a (3R)-hydroxyacyl-[ACP] = a (2E)-enoyl-[ACP] + H2O. In terms of biological role, involved in unsaturated fatty acids biosynthesis. Catalyzes the dehydration of short chain beta-hydroxyacyl-ACPs and long chain saturated and unsaturated beta-hydroxyacyl-ACPs. The sequence is that of 3-hydroxyacyl-[acyl-carrier-protein] dehydratase FabZ from Macrococcus caseolyticus (strain JCSC5402) (Macrococcoides caseolyticum).